The primary structure comprises 205 residues: MLAVYLHGFILSAAMILPLGPQNVFVMNQGIKRQHHLMSASLCALSDIILICAGIFGGSALLSRSPLLLALVTWGGVAFLMWYGWGALMAAWRGDGVASSATSVTQGRWRILVTLLAVTWLNPHVYLDTFVVLGSLGGQLLPDIRPWFALGAVTASIVWFFALALLAAWLSPWLNRPVAQRIINLFVGGVMGFIAFQLARQGFGL.

The next 6 membrane-spanning stretches (helical) occupy residues 1–21, 42–62, 67–87, 111–131, 147–167, and 185–205; these read MLAV…PLGP, LCAL…SALL, LLLA…GWGA, ILVT…DTFV, WFAL…ALLA, and LFVG…GFGL.

It belongs to the LysE/ArgO transporter (TC 2.A.75) family.

It is found in the cell inner membrane. It carries out the reaction L-arginine(in) = L-arginine(out). In terms of biological role, involved in the export of arginine. Important to control the intracellular level of arginine and the correct balance between arginine and lysine. The chain is Arginine exporter protein ArgO from Yersinia pseudotuberculosis serotype IB (strain PB1/+).